Here is a 226-residue protein sequence, read N- to C-terminus: MQLSTFSHSEEELLEKANWLAGFTLGEIAHQLNIDVPLDLRRDKGWVGQLIETALGAKAGSKPEQDFAHLGIELKTIPINHKGFPLETTFVSLAPLTQNIGITWQTSHVRHKLQKVLWIPVQGERHIPVAERHIGQPILWAPSCEQEQQLKNDWEELMEYIIFGRLNEINATLGEVLQLRPKGRNSRSLTAAVNQQGERVQSLPLGFYLRKQFTAEILQNFLRSPL.

Belongs to the MutH family.

It is found in the cytoplasm. In terms of biological role, sequence-specific endonuclease that cleaves unmethylated GATC sequences. It is involved in DNA mismatch repair. The chain is DNA mismatch repair protein MutH from Actinobacillus pleuropneumoniae serotype 3 (strain JL03).